Consider the following 84-residue polypeptide: Defensin-like protein 116 (84 aa).

Residues 1–24 (MAITKNMLVVLLLTIIFVTSSVHC) form the signal peptide. Disulfide bonds link Cys-40-Cys-80, Cys-46-Cys-71, Cys-55-Cys-78, and Cys-59-Cys-79.

The protein belongs to the DEFL family.

The protein resides in the secreted. This is Defensin-like protein 116 from Arabidopsis thaliana (Mouse-ear cress).